Reading from the N-terminus, the 268-residue chain is Probable membrane transporter protein HI_0806 (268 aa).

The next 8 helical transmembrane spans lie at 6–26, 46–66, 79–99, 101–121, 147–167, 178–198, 212–232, and 248–268; these read IFILLICGICTNMVSAIFGIG, VISATSLTIVMCTALINLLFF, ILWSIAMVIGVQIGFELSFYF, TAIISLIFTVSLSALAIKTFL, GGGLIAGITGIGGGSILAPLV, IAVYTNYMMIIGGIGNLYGYL, LGLNFLVVGVVTLGSFEMSFF, and LLAIILFCIAAYMCILEFVFH.

It belongs to the 4-toluene sulfonate uptake permease (TSUP) (TC 2.A.102) family.

Its subcellular location is the cell membrane. This Haemophilus influenzae (strain ATCC 51907 / DSM 11121 / KW20 / Rd) protein is Probable membrane transporter protein HI_0806.